The following is a 153-amino-acid chain: NADPH-dependent 7-cyano-7-deazaguanine reductase (153 aa).

Residues methionine 1–proline 22 form a disordered region. Cysteine 51 serves as the catalytic Thioimide intermediate. The Proton donor role is filled by aspartate 58. Substrate contacts are provided by residues valine 73–serine 75 and histidine 92–glutamate 93.

It belongs to the GTP cyclohydrolase I family. QueF type 1 subfamily.

It is found in the cytoplasm. It carries out the reaction 7-aminomethyl-7-carbaguanine + 2 NADP(+) = 7-cyano-7-deazaguanine + 2 NADPH + 3 H(+). It participates in tRNA modification; tRNA-queuosine biosynthesis. Its function is as follows. Catalyzes the NADPH-dependent reduction of 7-cyano-7-deazaguanine (preQ0) to 7-aminomethyl-7-deazaguanine (preQ1). The sequence is that of NADPH-dependent 7-cyano-7-deazaguanine reductase from Maricaulis maris (strain MCS10) (Caulobacter maris).